Consider the following 300-residue polypeptide: C-5 sterol desaturase (300 aa).

4 consecutive transmembrane segments (helical) span residues 3-23 (DPVL…WTAA), 68-88 (SLAL…QLSA), 91-111 (WYTW…YHRI), and 147-167 (ILMW…FCSW). Residues 94–227 (WVIAIVGVDL…LIIWDRLFGS (134 aa)) form the Fatty acid hydroxylase domain.

The protein belongs to the sterol desaturase family.

The protein localises to the cell membrane. This chain is C-5 sterol desaturase (erg3), found in Mycobacterium bovis (strain ATCC BAA-935 / AF2122/97).